The sequence spans 160 residues: Putative control protein C.MjaVP (160 aa).

May be involved in control of expression of the type II restriction enzyme MjaV and/or its methyltransferase M.MjaV. This is Putative control protein C.MjaVP from Methanocaldococcus jannaschii (strain ATCC 43067 / DSM 2661 / JAL-1 / JCM 10045 / NBRC 100440) (Methanococcus jannaschii).